Reading from the N-terminus, the 260-residue chain is uncharacterized protein (260 aa).

Residues 7 to 67 (VPALTRAIDI…DHQENFCLWT (61 aa)) form the HTH iclR-type domain. A DNA-binding region (H-T-H motif) is located at residues 28 to 47 (AATIIDTLGIPKSTAYLLLN). Positions 82-251 (LRELARPRLT…ARDISRLLGW (170 aa)) constitute an IclR-ED domain.

This is an uncharacterized protein from Escherichia coli (strain K12).